The chain runs to 512 residues: GMP synthase [glutamine-hydrolyzing] (512 aa).

The Glutamine amidotransferase type-1 domain maps to 7-197; it reads TIIVLDFGSQ…VFGVCGCSEG (191 aa). Cys84 (nucleophile) is an active-site residue. Active-site residues include His171 and Glu173. The GMPS ATP-PPase domain maps to 198 to 387; sequence WNMENFIEVE…LGIPDEIVWR (190 aa). 225–231 lines the ATP pocket; sequence SGGVDSS.

Homodimer.

The catalysed reaction is XMP + L-glutamine + ATP + H2O = GMP + L-glutamate + AMP + diphosphate + 2 H(+). It participates in purine metabolism; GMP biosynthesis; GMP from XMP (L-Gln route): step 1/1. Its function is as follows. Catalyzes the synthesis of GMP from XMP. This chain is GMP synthase [glutamine-hydrolyzing], found in Bacillus cytotoxicus (strain DSM 22905 / CIP 110041 / 391-98 / NVH 391-98).